The following is a 192-amino-acid chain: Signal peptidase complex catalytic subunit sec11 (192 aa).

The Cytoplasmic segment spans residues 1–18 (MLSFLSSNLSSTRQSLAQ). Residues 19–39 (VLNFALVLSTAFMLWKGLSVF) form a helical; Signal-anchor for type II membrane protein membrane-spanning segment. The Lumenal portion of the chain corresponds to 40–192 (TASSSPIVVV…GLMVILQREQ (153 aa)). Catalysis depends on charge relay system residues Ser-53, His-92, and Asp-133. Residues 177–188 (VLLGIMGLMVIL) are C-terminal short (CTS) helix.

The protein belongs to the peptidase S26B family. Component of the signal peptidase complex (SPC) composed of a catalytic subunit SEC11 and three accessory subunits SPC1, SPC2 and SPC3. The complex induces a local thinning of the ER membrane which is used to measure the length of the signal peptide (SP) h-region of protein substrates. This ensures the selectivity of the complex towards h-regions shorter than 18-20 amino acids. SPC associates with the translocon complex.

The protein resides in the endoplasmic reticulum membrane. The enzyme catalyses Cleavage of hydrophobic, N-terminal signal or leader sequences from secreted and periplasmic proteins.. In terms of biological role, catalytic component of the signal peptidase complex (SPC) which catalyzes the cleavage of N-terminal signal sequences from nascent proteins as they are translocated into the lumen of the endoplasmic reticulum. Specifically cleaves N-terminal signal peptides that contain a hydrophobic alpha-helix (h-region) shorter than 18-20 amino acids. This is Signal peptidase complex catalytic subunit sec11 (sec11) from Aspergillus clavatus (strain ATCC 1007 / CBS 513.65 / DSM 816 / NCTC 3887 / NRRL 1 / QM 1276 / 107).